We begin with the raw amino-acid sequence, 300 residues long: Cation-efflux pump FieF (300 aa).

Residues 24-44 form a helical membrane-spanning segment; sequence LLIKIFAWWYTGSVSILAALV. Residues aspartate 45 and aspartate 49 each contribute to the Zn(2+) site. 2 helical membrane passes run 82 to 102 and 114 to 134; these read AALAQSMFISGSALFLFLTGI and AGVGVVVTLIALFSTLALVTF. Zn(2+) is bound by residues histidine 153 and aspartate 157. A run of 2 helical transmembrane segments spans residues 156-176 and 178-198; these read SDVMMNGAILVALGLSWYGWH and ADALFALGIGIYILYSALRMG.

This sequence belongs to the cation diffusion facilitator (CDF) transporter (TC 2.A.4) family. FieF subfamily. As to quaternary structure, homodimer.

The protein resides in the cell inner membrane. The enzyme catalyses Zn(2+)(in) + H(+)(out) = Zn(2+)(out) + H(+)(in). It carries out the reaction Cd(2+)(in) + H(+)(out) = Cd(2+)(out) + H(+)(in). It catalyses the reaction Fe(2+)(in) + H(+)(out) = Fe(2+)(out) + H(+)(in). Its function is as follows. Divalent metal cation transporter which exports Zn(2+), Cd(2+) and possibly Fe(2+). May be involved in zinc and iron detoxification by efflux. This Klebsiella pneumoniae (strain 342) protein is Cation-efflux pump FieF.